We begin with the raw amino-acid sequence, 547 residues long: Ribosome protection protein VmlR (547 aa).

Residues 5 to 200 form the ABC transporter 1 domain; sequence VTLTNVSYEV…FREKKRLTQQ (196 aa). 37-44 contacts ATP; that stretch reads GKNGAGKS. The antibiotic resistance domain (ARD) stretch occupies residues 183–289; that stretch reads GNYSGYMKFR…SIDTTHKTGK (107 aa). 2 coiled-coil regions span residues 193–222 and 245–269; these read EKKR…GLAS and AKRT…AKAE. The ABC transporter 2 domain occupies 292 to 504; sequence LEVQNVTKAF…REELRLKLET (213 aa). 324–331 provides a ligand contact to ATP; the sequence is GPNGSGKT. The segment at 483–547 is C-terminal extension (CTE); it reads KQLNDVPSER…KELDHQDKKD (65 aa). The stretch at 488-543 forms a coiled coil; it reads VPSERNEREELRLKLETERQEVLGKLSFMTPNDKGYKELDQAFNELTKRIKELDHQ.

This sequence belongs to the ABC transporter superfamily. ABCF family. ARE2 subfamily. As to quaternary structure, binds within the E-site of the 70S ribosome, where it contacts ribosomal proteins L1, L5, L33-1, S7, S11, the 16 and 23S rRNAs and the acceptor arm of the P-site tRNA.

The protein localises to the cytoplasm. In terms of biological role, recognizes and binds in the vacant E-site of ribosomes stalled by some peptidyltransferase center (PTC)-targeting antibiotics. Makes contact with the PTC and both ribosomal subunits. Induces conformational changes in the P-site, which allows it to dislodge the antibiotic from its PTC binding site. Binds to ribosomes either directly following translation initation or subsequent to E tRNA release during elongation. Involved in resistance to a narrow spectrum of antibiotics (the streptogramin A antibiotic virginiamycin M, the lincosamide antibiotic lincomycin and the pleuromutilin antibiotic tiamulin). The protein is Ribosome protection protein VmlR of Bacillus subtilis (strain 168).